The chain runs to 210 residues: Large ribosomal subunit protein bL25 (210 aa).

The interval 185 to 210 is disordered; the sequence is APEPAGQPEVPPEPAEEAKAKTIEKE. The segment covering 200-210 has biased composition (basic and acidic residues); the sequence is EEAKAKTIEKE.

The protein belongs to the bacterial ribosomal protein bL25 family. CTC subfamily. As to quaternary structure, part of the 50S ribosomal subunit; part of the 5S rRNA/L5/L18/L25 subcomplex. Contacts the 5S rRNA. Binds to the 5S rRNA independently of L5 and L18.

In terms of biological role, this is one of the proteins that binds to the 5S RNA in the ribosome where it forms part of the central protuberance. This is Large ribosomal subunit protein bL25 from Desulforamulus reducens (strain ATCC BAA-1160 / DSM 100696 / MI-1) (Desulfotomaculum reducens).